We begin with the raw amino-acid sequence, 395 residues long: RNA demethylase ALKBH5 (395 aa).

Disordered stretches follow at residues 1-28 (MAAA…AGSR) and 47-83 (AAEP…EEEA). N-acetylalanine is present on A2. K58 is covalently cross-linked (Glycyl lysine isopeptide (Lys-Gly) (interchain with G-Cter in ubiquitin)). The segment covering 60–83 (KYQEDSDPERSDYEEHQLQKEEEA) has biased composition (basic and acidic residues). 2 positions are modified to phosphoserine: S65 and S70. A coiled-coil region spans residues 68–117 (ERSDYEEHQLQKEEEARKVKSGIRQIRLFSQDECSKIEARIDEVVSRAEK). At Y72 the chain carries Phosphotyrosine. Residue K87 forms a Glycyl lysine isopeptide (Lys-Gly) (interchain with G-Cter in SUMO1) linkage. At S88 the chain carries Phosphoserine. The residue at position 133 (K133) is an N6-acetyllysine. Y140 is a catalytic residue. Residues N194, Y196, and H205 each coordinate 2-oxoglutarate. An intrachain disulfide couples C231 to C268. K236 is subject to N6-acetyllysine. 2-oxoglutarate contacts are provided by H267 and R278. Residues 294–395 (ETKSLSSSTL…PTRKVKMRRH (102 aa)) form a disordered region. A compositionally biased stretch (low complexity) spans 296 to 306 (KSLSSSTLPPS). Residue K322 forms a Glycyl lysine isopeptide (Lys-Gly) (interchain with G-Cter in SUMO1) linkage. Phosphoserine is present on S326. A Glycyl lysine isopeptide (Lys-Gly) (interchain with G-Cter in SUMO2) cross-link involves residue K329. Positions 329–350 (KADPDAAHRPRILEMDKEENRR) are enriched in basic and acidic residues. Omega-N-methylarginine is present on R360. A phosphoserine mark is found at S362, S372, S375, and S385.

This sequence belongs to the alkB family. Monomer. Interacts with RBM33; promoting desumoylation by SENP1 and recruitment to N(6)-methyladenosine-containing mRNAs. Interacts (when acetylated by KAT8) with PSPC1; interaction facilitates recognition of N(6)-methyladenosine (m6A) mRNA. The cofactor is Fe(2+). Post-translationally, phosphorylated at Ser-88 and Ser-326 in response to reactive oxygen species (ROS), promoting sumoylation and inactivation. In terms of processing, acetylated by KAT8 at Lys-236, promoting interaction with PSPC1, thereby facilitating recognition of N(6)-methyladenosine (m6A) mRNA by ALKBH5. Deacetylated at Lys-236 by HDAC7. Sumoylated at Lys-87 and Lys-322 by PIAS4 following phosphorylation at Ser-88 and Ser-326 in response to reactive oxygen species (ROS), inhibiting the RNA demethylase activity. Desumoylated by SENP1; relieving RNA demethylase inhibition, leading to N(6)-methyladenosine-containing mRNAs demethylation. Post-translationally, ubiquitinated at Lys-58 via 'Lys-48'-linked polyubiquitin chain, leading to its degradation by the proteasome. Deubiquitinated at Lys-58 by USP9X, promoting its stabilizazion. Widely expressed, with highest expression in testis. In testis, present in almost all testicular cell types except elongating and elongated spermatids (at protein level). Among spermatogenic cells, present at high level in spermatocytes; medium levels in spermatogonia and lower levels in round spermatids (at protein level).

The protein localises to the nucleus speckle. The catalysed reaction is an N(6)-methyladenosine in mRNA + 2-oxoglutarate + O2 = an adenosine in mRNA + formaldehyde + succinate + CO2. Its activity is regulated as follows. RNA demethylase activity is inhibited following sumoylation. Inhibition is relieved following desumoylation. Inhibited by histone demethylase inhibitor IOX1. In terms of biological role, dioxygenase that specifically demethylates N(6)-methyladenosine (m6A) RNA, the most prevalent internal modification of messenger RNA (mRNA) in higher eukaryotes. Demethylates RNA by oxidative demethylation, which requires molecular oxygen, alpha-ketoglutarate and iron. Demethylation of m6A mRNA affects mRNA processing, translation and export. Can also demethylate N(6)-methyladenosine in single-stranded DNA (in vitro). Required for the late meiotic and haploid phases of spermatogenesis by mediating m6A demethylation in spermatocytes and round spermatids: m6A demethylation of target transcripts is required for correct splicing and the production of longer 3'-UTR mRNAs in male germ cells. Involved in paraspeckle assembly, a nuclear membraneless organelle, by undergoing liquid-liquid phase separation. Paraspeckle assembly is coupled with m6A demethylation of RNAs, such as NEAT1 non-coding RNA. Also acts as a negative regulator of T-cell development: inhibits gamma-delta T-cell proliferation via demethylation of JAG1 and NOTCH2 transcripts. Inhibits regulatory T-cell (Treg) recruitment by mediating demethylation and destabilization of CCL28 mRNAs. The polypeptide is RNA demethylase ALKBH5 (Mus musculus (Mouse)).